The following is a 77-amino-acid chain: Translation initiation factor IF-1, chloroplastic (77 aa).

The S1-like domain occupies 1–71 (MKEQKWIHEG…TKGRIIYRIR (71 aa)).

Belongs to the IF-1 family. Component of the 30S ribosomal translation pre-initiation complex which assembles on the 30S ribosome in the order IF-2 and IF-3, IF-1 and N-formylmethionyl-tRNA(fMet); mRNA recruitment can occur at any time during PIC assembly.

The protein localises to the plastid. Its subcellular location is the chloroplast. Functionally, one of the essential components for the initiation of protein synthesis. Stabilizes the binding of IF-2 and IF-3 on the 30S subunit to which N-formylmethionyl-tRNA(fMet) subsequently binds. Helps modulate mRNA selection, yielding the 30S pre-initiation complex (PIC). Upon addition of the 50S ribosomal subunit IF-1, IF-2 and IF-3 are released leaving the mature 70S translation initiation complex. The protein is Translation initiation factor IF-1, chloroplastic of Vitis vinifera (Grape).